The primary structure comprises 131 residues: ATP synthase epsilon chain (131 aa).

Belongs to the ATPase epsilon chain family. As to quaternary structure, F-type ATPases have 2 components, CF(1) - the catalytic core - and CF(0) - the membrane proton channel. CF(1) has five subunits: alpha(3), beta(3), gamma(1), delta(1), epsilon(1). CF(0) has three main subunits: a, b and c.

It is found in the cell inner membrane. In terms of biological role, produces ATP from ADP in the presence of a proton gradient across the membrane. In Helicobacter hepaticus (strain ATCC 51449 / 3B1), this protein is ATP synthase epsilon chain.